Consider the following 289-residue polypeptide: MPKISHSALRRTFRELLATPTCVETASVFDPMSARIAADLGFEVGILGGSVASLQVLAAPDFALITLSEFVEQATRIGRVAQLPFIADADHGYGNALNVMRTVEELERAGVAALTIEDTLLPAQFGRKSTDLISIEEGIGKVRAALEARVDPELSIIARTNAGVLPTEAVIERTLAYQKAGADGICMVGVADFEHLEQIAENLTVPLMLVTYGNPKLNDAKRLASLGVRVVVAGHGAYFAAIKATYDSLRAQRQLTHSTDNLSATELTHTYTLPENYVAWAEEFMDVKE.

A substrate-binding site is contributed by serine 50. Position 88 (aspartate 88) interacts with Mg(2+). Positions 159 and 235 each coordinate substrate.

The protein belongs to the isocitrate lyase family. Oxaloacetate decarboxylase subfamily. As to quaternary structure, homotetramer; dimer of dimers. The cofactor is Mg(2+).

It carries out the reaction oxaloacetate + H(+) = pyruvate + CO2. Functionally, catalyzes the decarboxylation of oxaloacetate into pyruvate. Seems to play a role in maintaining cellular concentrations of bicarbonate and pyruvate. The chain is Oxaloacetate decarboxylase from Pseudomonas fluorescens (strain SBW25).